The primary structure comprises 281 residues: Cardosin-F (281 aa).

A Peptidase A1 domain is found at 18–278 (YYGEIGIGTP…DYGNLLVGFA (261 aa)). Residue Asp36 is part of the active site. Cys181 and Cys185 are oxidised to a cystine. The active site involves Asp190. N-linked (GlcNAc...) asparagine glycosylation is present at Asn213.

Belongs to the peptidase A1 family. In terms of assembly, heterodimer of a light chain and a heavy chain. An intermediate form is produced first, and undergoes proteolytic processing to remove the internal plant-specific insert (PSI) and the propeptide. N-glycosylated. In terms of tissue distribution, pistils.

Its subcellular location is the microsome membrane. It localises to the protein storage vacuole. The protein resides in the secreted. The protein localises to the cell wall. It is found in the extracellular space. Its subcellular location is the extracellular matrix. With respect to regulation, inhibited by pepstatin. Functionally, aspartic protease with a high preference for bonds between hydrophobic residues. The polypeptide is Cardosin-F (Cynara cardunculus (Cardoon)).